The following is a 139-amino-acid chain: Small ribosomal subunit protein bS6 (139 aa).

Positions 120 to 139 (KGASKVETPTGPESTDIQEK) are disordered. The segment covering 130 to 139 (GPESTDIQEK) has biased composition (polar residues).

Belongs to the bacterial ribosomal protein bS6 family.

Functionally, binds together with bS18 to 16S ribosomal RNA. This is Small ribosomal subunit protein bS6 (rpsF) from Borreliella burgdorferi (strain ATCC 35210 / DSM 4680 / CIP 102532 / B31) (Borrelia burgdorferi).